The chain runs to 354 residues: P2Y purinoceptor 13 (354 aa).

The Extracellular portion of the chain corresponds to 1–49 (MTAAIRRQRELSILPKVTLEAMNTTVMQGFNRSERCPRDTRIVQLVFPA). 2 N-linked (GlcNAc...) asparagine glycosylation sites follow: Asn23 and Asn31. Residues 50 to 70 (LYTVVFLTGILLNTLALWVFV) form a helical membrane-spanning segment. Residues 71 to 77 (HIPSSST) are Cytoplasmic-facing. A helical membrane pass occupies residues 78-98 (FIIYLKNTLVADLIMTLMLPF). Residues 99-117 (KILSDSHLAPWQLRAFVCR) are Extracellular-facing. Cys116 and Cys194 are disulfide-bonded. The chain crosses the membrane as a helical span at residues 118–138 (FSSVIFYETMYVGIVLLGLIA). The Cytoplasmic segment spans residues 139–161 (FDRFLKIIRPLRNIFLKKPVFAK). Residues 162–182 (TVSIFIWFFLFFISLPNTILS) traverse the membrane as a helical segment. Residues 183–211 (NKEATPSSVKKCASLKGPLGLKWHQMVNN) lie on the Extracellular side of the membrane. Residues 212-232 (ICQFIFWTVFILMLVFYVVIA) traverse the membrane as a helical segment. The Cytoplasmic portion of the chain corresponds to 233–252 (KKVYDSYRKSKSKDRKNNKK). Residues 253 to 273 (LEGKVFVVVAVFFVCFAPFHF) form a helical membrane-spanning segment. The Extracellular segment spans residues 274 to 300 (ARVPYTHSQTNNKTDCRLQNQLFIAKE). Asn285 carries an N-linked (GlcNAc...) asparagine glycan. Residues 301–321 (TTLFLAATNICMDPLIYIFLC) form a helical membrane-spanning segment. Residues 322 to 333 (KKFTEKLPCMQG) are Cytoplasmic-facing. The interval 335 to 354 (KTTASSQENHSSQTDNITLG) is disordered.

The protein belongs to the G-protein coupled receptor 1 family. In terms of tissue distribution, strong expression in spleen and adult brain. Lower expression in placenta, lung, liver, spinal cord, thymus, small intestine, uterus, stomach, testis, fetal brain, and adrenal gland. Not detected in pancreas, heart, kidney, skeletal muscle, ovary or fetal aorta. Clearly detected in lymph node and bone marrow, weakly detected in peripheral blood mononuclear cells (PBMC) and in peripheral blood leukocytes (PBL), but not detected in polymorphonuclear cells (PMN). In the brain, detected in all brain regions examined.

Its subcellular location is the cell membrane. Functionally, receptor for ADP. Coupled to G(i)-proteins. May play a role in hematopoiesis and the immune system. The protein is P2Y purinoceptor 13 (P2RY13) of Homo sapiens (Human).